The chain runs to 88 residues: Putative sulfur carrier protein AF_0552 (88 aa).

This sequence belongs to the sulfur carrier protein CysO family.

This Archaeoglobus fulgidus (strain ATCC 49558 / DSM 4304 / JCM 9628 / NBRC 100126 / VC-16) protein is Putative sulfur carrier protein AF_0552.